Here is an 86-residue protein sequence, read N- to C-terminus: Small ribosomal subunit protein uS17 (86 aa).

This sequence belongs to the universal ribosomal protein uS17 family. As to quaternary structure, part of the 30S ribosomal subunit.

Its function is as follows. One of the primary rRNA binding proteins, it binds specifically to the 5'-end of 16S ribosomal RNA. The chain is Small ribosomal subunit protein uS17 from Chlamydia pneumoniae (Chlamydophila pneumoniae).